A 106-amino-acid chain; its full sequence is MTEITKLDPDVAIDLAYDIFLEMAPEHLDPADILLFNLQFEERGGVEFVETADDWEMEIGVLIDPEEYAEVWIGLVNEQDEMDDIFAKFLISHREEDREFHVVWKK.

This sequence belongs to the putative dsDNA mimic protein family.

May act as a double-stranded DNA (dsDNA) mimic. Probably regulates the activity of a dsDNA-binding protein. This is Putative double-stranded DNA mimic protein PM0536 from Pasteurella multocida (strain Pm70).